A 283-amino-acid polypeptide reads, in one-letter code: Thymidylate synthase (283 aa).

R22 is a binding site for dUMP. C160 serves as the catalytic Nucleophile. DUMP contacts are provided by residues 180-183, N191, and 221-223; these read RSCD and HIY. D183 contacts (6R)-5,10-methylene-5,6,7,8-tetrahydrofolate. S282 lines the (6R)-5,10-methylene-5,6,7,8-tetrahydrofolate pocket.

This sequence belongs to the thymidylate synthase family. Bacterial-type ThyA subfamily. As to quaternary structure, homodimer.

Its subcellular location is the cytoplasm. It carries out the reaction dUMP + (6R)-5,10-methylene-5,6,7,8-tetrahydrofolate = 7,8-dihydrofolate + dTMP. It participates in pyrimidine metabolism; dTTP biosynthesis. Its function is as follows. Catalyzes the reductive methylation of 2'-deoxyuridine-5'-monophosphate (dUMP) to 2'-deoxythymidine-5'-monophosphate (dTMP) while utilizing 5,10-methylenetetrahydrofolate (mTHF) as the methyl donor and reductant in the reaction, yielding dihydrofolate (DHF) as a by-product. This enzymatic reaction provides an intracellular de novo source of dTMP, an essential precursor for DNA biosynthesis. This is Thymidylate synthase from Pseudoalteromonas translucida (strain TAC 125).